A 182-amino-acid chain; its full sequence is Plasmolipin (182 aa).

The Cytoplasmic segment spans residues 1–35; sequence MAEFPSKVSTRTSSPAQGAEASVSALRPDLGFVRS. The residue at position 9 (Ser-9) is a Phosphoserine. Residues 32–166 form the MARVEL domain; sequence FVRSRLGALM…SAFFSYQAWR (135 aa). Residues 36-56 form a helical membrane-spanning segment; the sequence is RLGALMLLQLVLGLLVWALIA. Residues 57–68 lie on the Extracellular side of the membrane; that stretch reads DTPYHLYPAYGW. A helical membrane pass occupies residues 69–89; it reads VMFVAVFLWLVTIVLFNLYLF. The Cytoplasmic portion of the chain corresponds to 90–99; it reads QLHMKLYMVP. Residues 100–120 form a helical membrane-spanning segment; the sequence is WPLVLMIFNISATVLYITAFI. The Extracellular portion of the chain corresponds to 121-141; sequence ACSAAVDLTSLRGTRPYNQRA. The chain crosses the membrane as a helical span at residues 142 to 162; sequence AASFFACLVMIAYGVSAFFSY. Over 163–182 the chain is Cytoplasmic; it reads QAWRGVGSNAATSQMAGGYA.

The protein belongs to the MAL family. As to quaternary structure, forms oligomers. In terms of processing, phosphorylated.

It localises to the cell membrane. Its subcellular location is the myelin membrane. It is found in the apical cell membrane. The protein resides in the golgi apparatus. Its function is as follows. Main component of the myelin sheath that plays an important role in myelin membrane biogenesis and myelination. Plays an essential function in apical endocytosis. Regulates epithelial development through the regulation of apical endocytosis. Part of the intracellular machinery that mediates basolateral-to-apical transport of ICAM-1, an essential adhesion receptor in epithelial cells, from the subapical compartment in hepatic epithelial cells. This chain is Plasmolipin, found in Homo sapiens (Human).